The chain runs to 1131 residues: PolyA-specific ribonuclease subunit panl-2 (1131 aa).

In terms of domain architecture, USP spans 489-864 (VTMQSTHGMN…LPALLAYKKK (376 aa)). The 166-residue stretch at 909-1074 (VGLDAEFIKI…VDARYALKLY (166 aa)) folds into the Exonuclease domain. Residues 1104-1115 (QTSSPLVVSTTR) are compositionally biased toward polar residues. The interval 1104–1131 (QTSSPLVVSTTRKTPEDTNPADAAPKSV) is disordered.

In Caenorhabditis elegans, this protein is PolyA-specific ribonuclease subunit panl-2.